The primary structure comprises 915 residues: Protein MEI2-like 1 (915 aa).

Residues 1–90 (MPSDIMEQRG…NTTNGSQWES (90 aa)) are disordered. Basic and acidic residues predominate over residues 16–25 (HFHEDIHITS). Polar residues predominate over residues 50-65 (MPKSSWTSESYQLKPQ). Residues 66–77 (SSFSGSHPSGSP) are compositionally biased toward low complexity. Residue serine 76 is modified to Phosphoserine. The segment covering 78–89 (NARNTTNGSQWE) has biased composition (polar residues). 2 RRM domains span residues 217–290 (RTLL…YSIS) and 302–375 (GALL…PTYP). Disordered stretches follow at residues 690 to 723 (PGRS…SSSN) and 854 to 915 (LFHT…LKEN). Positions 705–723 (PNERYRNLSHRRSESSSSN) are enriched in basic and acidic residues. Residues 882 to 898 (RSSSIDNYNSFSISSVS) show a composition bias toward polar residues.

Expressed in roots, shoots, leaves, flowers and siliques.

Probable RNA-binding transcriptional activator that plays a role in meiosis and vegetative growth. May be a downstream effector of TOR signaling pathway and recruited by RAPTOR1 for TOR substrate. This chain is Protein MEI2-like 1 (ML1), found in Arabidopsis thaliana (Mouse-ear cress).